A 497-amino-acid chain; its full sequence is Aspartyl/glutamyl-tRNA(Asn/Gln) amidotransferase subunit B (497 aa).

Belongs to the GatB/GatE family. GatB subfamily. As to quaternary structure, heterotrimer of A, B and C subunits.

It catalyses the reaction L-glutamyl-tRNA(Gln) + L-glutamine + ATP + H2O = L-glutaminyl-tRNA(Gln) + L-glutamate + ADP + phosphate + H(+). The enzyme catalyses L-aspartyl-tRNA(Asn) + L-glutamine + ATP + H2O = L-asparaginyl-tRNA(Asn) + L-glutamate + ADP + phosphate + 2 H(+). Its function is as follows. Allows the formation of correctly charged Asn-tRNA(Asn) or Gln-tRNA(Gln) through the transamidation of misacylated Asp-tRNA(Asn) or Glu-tRNA(Gln) in organisms which lack either or both of asparaginyl-tRNA or glutaminyl-tRNA synthetases. The reaction takes place in the presence of glutamine and ATP through an activated phospho-Asp-tRNA(Asn) or phospho-Glu-tRNA(Gln). In Cutibacterium acnes (strain DSM 16379 / KPA171202) (Propionibacterium acnes), this protein is Aspartyl/glutamyl-tRNA(Asn/Gln) amidotransferase subunit B.